Here is a 338-residue protein sequence, read N- to C-terminus: Glycerol-3-phosphate dehydrogenase [NAD(P)+] (338 aa).

4 residues coordinate NADPH: serine 14, tyrosine 15, histidine 35, and lysine 109. 3 residues coordinate sn-glycerol 3-phosphate: lysine 109, glycine 138, and threonine 140. NADPH is bound at residue alanine 142. The sn-glycerol 3-phosphate site is built by lysine 194, aspartate 247, serine 257, arginine 258, and asparagine 259. The active-site Proton acceptor is the lysine 194. NADPH is bound at residue arginine 258. Valine 282 and glutamate 284 together coordinate NADPH.

The protein belongs to the NAD-dependent glycerol-3-phosphate dehydrogenase family.

Its subcellular location is the cytoplasm. It catalyses the reaction sn-glycerol 3-phosphate + NAD(+) = dihydroxyacetone phosphate + NADH + H(+). It carries out the reaction sn-glycerol 3-phosphate + NADP(+) = dihydroxyacetone phosphate + NADPH + H(+). It participates in membrane lipid metabolism; glycerophospholipid metabolism. Functionally, catalyzes the reduction of the glycolytic intermediate dihydroxyacetone phosphate (DHAP) to sn-glycerol 3-phosphate (G3P), the key precursor for phospholipid synthesis. The chain is Glycerol-3-phosphate dehydrogenase [NAD(P)+] from Shewanella baltica (strain OS195).